The following is a 512-amino-acid chain: Cytochrome P450 monooxygenase cheE (512 aa).

The helical transmembrane segment at 5–27 threads the bilayer; that stretch reads YFAAESSWSPYVILVLALAAMVA. 3 N-linked (GlcNAc...) asparagine glycosylation sites follow: Asn-53, Asn-124, and Asn-168. Cys-455 contacts heme. Residues Asn-499 and Asn-508 are each glycosylated (N-linked (GlcNAc...) asparagine).

It belongs to the cytochrome P450 family. Heme is required as a cofactor.

The protein resides in the membrane. It functions in the pathway secondary metabolite biosynthesis. In terms of biological role, cytochrome P450 monooxygenase; part of the gene cluster that mediates the biosynthesis of chaetoglobosin A which has a unique inhibitory activity against actin polymerization in mammalian cells. Chaetoglobosin A and its intermediates are involved in the morphological differentiation of C.globosum. The first step of the pathway is the synthesis of prochaetoglobosin I via condensation of one acetyl-CoA, 8 malonyl-CoA, and a L-tryptophan molecule by the PKS-NRPS hybrid synthetase cheA, followed by reduction of backbone double bond to install desired geometry by the enoyl reductase cheB. Further multiple oxidation steps performed by the cytochrome P450 monooxygenases cheE and cheG, as well as by the FAD-linked oxidoreductase cheF, lead to the formation of chaetoglobosin A. Depending on the order of action of these reductases, distinct intermediates can be identified. Within the pathway, the cytochrome P450 monooxygenase cheE catalyzes a stereospecific epoxidation on prochaetoglobosin I, cytoglobosin D, and chaetoglobosin J intermediates. The FAD-linked oxidoreductase cheF performs dehydrogenation of the C-20 hydroxyl groups in the 20-dihyrochaetoglobosin A and cytoglobosin D intermediates. Finally, the cytochrome P450 monooxygenase cheG can catalyze the stereospecific dihydroxylation of prochaetoglobosin I and prochaetoglobosin IV at C-19 and C-20, respectively. The Diels-Alderase cheD may play a role in the post-PKS-NRPS biosynthetic steps catalyzing Diels-Alder cyclization. This Chaetomium globosum (strain ATCC 6205 / CBS 148.51 / DSM 1962 / NBRC 6347 / NRRL 1970) (Soil fungus) protein is Cytochrome P450 monooxygenase cheE.